We begin with the raw amino-acid sequence, 468 residues long: MAPISRETDFLVIGGGSGGIATARAAAGKYGIKSMVVEGKRLGGTCVNVGCVPKKVTFYAALVAETIHQAKDYGFSVEQTAPFDWPTFKQKRDAYVARLNGIYERNLANDKVEYVHGWAKLLSPNSVEVTLDDGTKSVVNAKKILIAVGGNPTIPPHIPGSEYGTNSDGFFDIDTLPKKVALVGAGYIAVEFAGMLNALGVETHLFIRHDTFLRSFDPMIQQVSVKEYERIGVKVHKKSQLTSVQKDAAGKLAINFKEGEGEQSISDVDHLIWAVGRTPAVEGLGLDKAGVKTNEKGYIEVDEYQNTSTENIYAVGDVCGQVELTPVAIAAGRKLAARLFGPEEFRTLKLNYDNVPSVVFAHPEIGSIGLTEPEAVAKYGAENLKIYKSSFTAMYYAMMKPEDKAPTAYKLICAGPEEKVVGLHIIGLGSGEILQGFGVAVNMGATKADFDNCVAIHPTSAEELVTLK.

FAD-binding residues include S17 and G18. S17 contacts glutathione. R24 is a binding site for glutathione. Positions 38, 45, 46, and 54 each coordinate FAD. A disulfide bridge links C46 with C51. Residue Y103 coordinates glutathione. Residue A119 coordinates FAD. Residues A185, I188, E191, R208, R214, and G276 each contribute to the NADP(+) site. D317 contacts FAD. E323 contacts NADP(+). T325 contributes to the FAD binding site. R333 lines the glutathione pocket. V358 is an NADP(+) binding site. K410 serves as a coordination point for glutathione. Residue H457 participates in FAD binding. H457 serves as the catalytic Proton acceptor.

It belongs to the class-I pyridine nucleotide-disulfide oxidoreductase family. As to quaternary structure, homodimer. It depends on FAD as a cofactor.

Its subcellular location is the cytoplasm. It localises to the mitochondrion. The enzyme catalyses 2 glutathione + NADP(+) = glutathione disulfide + NADPH + H(+). In terms of biological role, catalyzes the reduction of glutathione disulfide (GSSG) to reduced glutathione (GSH). Constitutes the major mechanism to maintain a high GSH:GSSG ratio in the cytosol. The protein is Glutathione reductase (gtr-1) of Neurospora crassa (strain ATCC 24698 / 74-OR23-1A / CBS 708.71 / DSM 1257 / FGSC 987).